The chain runs to 340 residues: Anthranilate phosphoribosyltransferase (340 aa).

5-phospho-alpha-D-ribose 1-diphosphate-binding positions include Gly78, Gly81–Asp82, Thr86, Asn88–Thr91, Lys106–Ser114, and Ser118. Gly78 serves as a coordination point for anthranilate. Ser90 contacts Mg(2+). Asn109 contacts anthranilate. Arg164 provides a ligand contact to anthranilate. Positions 223 and 224 each coordinate Mg(2+).

It belongs to the anthranilate phosphoribosyltransferase family. In terms of assembly, homodimer. Mg(2+) serves as cofactor.

It carries out the reaction N-(5-phospho-beta-D-ribosyl)anthranilate + diphosphate = 5-phospho-alpha-D-ribose 1-diphosphate + anthranilate. It functions in the pathway amino-acid biosynthesis; L-tryptophan biosynthesis; L-tryptophan from chorismate: step 2/5. Its function is as follows. Catalyzes the transfer of the phosphoribosyl group of 5-phosphorylribose-1-pyrophosphate (PRPP) to anthranilate to yield N-(5'-phosphoribosyl)-anthranilate (PRA). The polypeptide is Anthranilate phosphoribosyltransferase (Bacillus pumilus (Bacillus mesentericus)).